A 136-amino-acid chain; its full sequence is Cytidine deaminase (136 aa).

The CMP/dCMP-type deaminase domain occupies 1-128 (MNRQELITEA…ELLPGAFSSE (128 aa)). A substrate-binding site is contributed by 42–44 (NIE). Cys53 serves as a coordination point for Zn(2+). Glu55 serves as the catalytic Proton donor. Zn(2+)-binding residues include Cys86 and Cys89.

The protein belongs to the cytidine and deoxycytidylate deaminase family. As to quaternary structure, homotetramer. Requires Zn(2+) as cofactor.

It carries out the reaction cytidine + H2O + H(+) = uridine + NH4(+). The catalysed reaction is 2'-deoxycytidine + H2O + H(+) = 2'-deoxyuridine + NH4(+). Its function is as follows. This enzyme scavenges exogenous and endogenous cytidine and 2'-deoxycytidine for UMP synthesis. The chain is Cytidine deaminase (cdd) from Bacillus subtilis (strain 168).